The primary structure comprises 266 residues: L-aspartate dehydrogenase (266 aa).

Positions 123 and 189 each coordinate NAD(+). H219 is an active-site residue.

This sequence belongs to the L-aspartate dehydrogenase family.

It catalyses the reaction L-aspartate + NADP(+) + H2O = oxaloacetate + NH4(+) + NADPH + H(+). The catalysed reaction is L-aspartate + NAD(+) + H2O = oxaloacetate + NH4(+) + NADH + H(+). The protein operates within cofactor biosynthesis; NAD(+) biosynthesis; iminoaspartate from L-aspartate (dehydrogenase route): step 1/1. In terms of biological role, specifically catalyzes the NAD or NADP-dependent dehydrogenation of L-aspartate to iminoaspartate. This is L-aspartate dehydrogenase from Cupriavidus necator (strain ATCC 17699 / DSM 428 / KCTC 22496 / NCIMB 10442 / H16 / Stanier 337) (Ralstonia eutropha).